A 709-amino-acid polypeptide reads, in one-letter code: Threonine--tRNA ligase, mitochondrial 1 (709 aa).

Residues 1–21 (MLLRLTARSIRRFTTSSSSLP) constitute a mitochondrion transit peptide. A TGS domain is found at 73–135 (DPIKVTLPDG…EGDCKLELFK (63 aa)). Cys407, His458, and His584 together coordinate Zn(2+).

This sequence belongs to the class-II aminoacyl-tRNA synthetase family.

It is found in the mitochondrion. It localises to the cytoplasm. The protein resides in the cytosol. The enzyme catalyses tRNA(Thr) + L-threonine + ATP = L-threonyl-tRNA(Thr) + AMP + diphosphate + H(+). The polypeptide is Threonine--tRNA ligase, mitochondrial 1 (Arabidopsis thaliana (Mouse-ear cress)).